A 494-amino-acid chain; its full sequence is UPF0371 protein SP70585_0405 (494 aa).

This sequence belongs to the UPF0371 family.

The protein is UPF0371 protein SP70585_0405 of Streptococcus pneumoniae (strain 70585).